Reading from the N-terminus, the 860-residue chain is Glucans biosynthesis glucosyltransferase H (860 aa).

Transmembrane regions (helical) follow at residues 146–166 (ILLI…KGIL), 200–220 (ILLL…TALM), 519–539 (VFLT…FLVL), 576–596 (LFST…ILIW), 610–630 (TVSM…RMLF), and 686–706 (FLWW…VSVI).

It belongs to the glycosyltransferase 2 family. OpgH subfamily.

Its subcellular location is the cell inner membrane. It participates in glycan metabolism; osmoregulated periplasmic glucan (OPG) biosynthesis. In terms of biological role, involved in the biosynthesis of osmoregulated periplasmic glucans (OPGs). This Pseudomonas syringae pv. syringae (strain B728a) protein is Glucans biosynthesis glucosyltransferase H.